The following is a 107-amino-acid chain: Ig kappa chain V-VI region J539 (107 aa).

The tract at residues 1-23 (EIVLTQSPAITAASLGQKVTITC) is framework-1. A disulfide bridge connects residues Cys23 and Cys87. Residues 24–33 (SASSSVSSLH) form a complementarity-determining-1 region. Positions 34–48 (WYQQKSGTSPKPWIY) are framework-2. The interval 49 to 55 (EISKLAS) is complementarity-determining-2. The segment at 56 to 87 (GVPARFSGSGSGTSYSLTINTMEAEDAAIYYC) is framework-3. A complementarity-determining-3 region spans residues 88 to 96 (QQWTYPLIT). The segment at 97–106 (FGAGTKLELK) is framework-4.

In Mus musculus (Mouse), this protein is Ig kappa chain V-VI region J539.